A 336-amino-acid polypeptide reads, in one-letter code: Telomere-binding protein cav (336 aa).

Positions 107–328 are required for binding to Su(var)205; it reads RKKMVQPYPE…TITFQNSESE (222 aa). Disordered stretches follow at residues 137–158 and 199–218; these read RLDRWQRKKTQNLSAQESSPAR and SSDLSGIGDDEDEHQQSEFQ. 2 consecutive short sequence motifs (su(var)205-binding Pro-containing repeat) follow at residues 225-231 and 289-295; these read PETAINE and PETEMNE. Over residues 308–327 the composition is skewed to polar residues; it reads MSIGPSIDSEGTITFQNSES. Residues 308 to 336 are disordered; the sequence is MSIGPSIDSEGTITFQNSESEPIDVDSIA.

Interacts (via C-terminus) with Su(var)205 dimer (via hinge and chromoshadow domain) and with moi to form the terminin, telomere-capping, complex. Interacts with HP6, which is also part of the terminin complex.

It is found in the nucleus. The protein resides in the chromosome. Its subcellular location is the telomere. Its function is as follows. Binds to chromosome ends in a sequence-dependent manner and is required for telomere capping. This is Telomere-binding protein cav from Drosophila sechellia (Fruit fly).